The sequence spans 558 residues: MTDESTADAGRDFIRDIVAADLASGKHKSVVTRFPPEPNGYLHLGHAKSICLNFGIAEEFGGCCHLRFDDTNPTKEEQEYIDAIQRDVRWLGFDWGKNLHYASDYFEQLYAWAQHLVRAGKAYVDDQSQEDIRLARGTLTEPGRDSPFRDRPVDENLDLFARMRAGEFPNGARVLRARIDMASGNINLRDPVLYRILHAPHPRTGTAWNIYPSYDFAHGQSDSIEHITHSICTLEFEDHRPLYDWFLDNLPVPSRPHQYEFARLNVTHTLLSKRILTELVRGGHVAGWDDPRMPTLAGLQRRGVPAEALREFIKRIGVAKANSTVDVGMLDFAIRETLNKSAPRRMAVLRPLKIVIENYPEGESEELEAVNHPDDPSRGTRRIRFGRELYIEQDDFMENPPKKFFRLSPGREVRLRYAYFVTCREVVKNAAGDVVELRCTYDPATKGGNAPDGRKVKATMHWVSAAEAVPAEIRLYGHLFATAQPDAANFASELNPQSLETLSGMVEPALARDDTDGAVQFERQGYFCRDRDSSPGRLVFNRTVGLRDTWAKVAAAGS.

The short motif at 36–46 is the 'HIGH' region element; sequence PEPNGYLHLGH. ATP contacts are provided by residues 37-39 and 43-49; these read EPN and HLGHAKS. L-glutamine contacts are provided by aspartate 69 and tyrosine 214. ATP is bound by residues threonine 233, 263-264, and 271-273; these read RL and LSK. Positions 270–274 match the 'KMSKS' region motif; that stretch reads LLSKR.

The protein belongs to the class-I aminoacyl-tRNA synthetase family. In terms of assembly, monomer.

Its subcellular location is the cytoplasm. The enzyme catalyses tRNA(Gln) + L-glutamine + ATP = L-glutaminyl-tRNA(Gln) + AMP + diphosphate. The sequence is that of Glutamine--tRNA ligase from Nitrobacter hamburgensis (strain DSM 10229 / NCIMB 13809 / X14).